The following is a 414-amino-acid chain: Serine hydroxymethyltransferase (414 aa).

Residues Leu-121 and 125–127 (GHL) contribute to the (6S)-5,6,7,8-tetrahydrofolate site. Lys-229 is subject to N6-(pyridoxal phosphate)lysine.

The protein belongs to the SHMT family. Homodimer. Pyridoxal 5'-phosphate is required as a cofactor.

The protein resides in the cytoplasm. The enzyme catalyses (6R)-5,10-methylene-5,6,7,8-tetrahydrofolate + glycine + H2O = (6S)-5,6,7,8-tetrahydrofolate + L-serine. It participates in one-carbon metabolism; tetrahydrofolate interconversion. Its pathway is amino-acid biosynthesis; glycine biosynthesis; glycine from L-serine: step 1/1. In terms of biological role, catalyzes the reversible interconversion of serine and glycine with tetrahydrofolate (THF) serving as the one-carbon carrier. This reaction serves as the major source of one-carbon groups required for the biosynthesis of purines, thymidylate, methionine, and other important biomolecules. Also exhibits THF-independent aldolase activity toward beta-hydroxyamino acids, producing glycine and aldehydes, via a retro-aldol mechanism. The protein is Serine hydroxymethyltransferase of Thiobacillus denitrificans (strain ATCC 25259 / T1).